The following is a 247-amino-acid chain: Segregation and condensation protein A (247 aa).

This sequence belongs to the ScpA family. In terms of assembly, component of a cohesin-like complex composed of ScpA, ScpB and the Smc homodimer, in which ScpA and ScpB bind to the head domain of Smc. The presence of the three proteins is required for the association of the complex with DNA.

It localises to the cytoplasm. Participates in chromosomal partition during cell division. May act via the formation of a condensin-like complex containing Smc and ScpB that pull DNA away from mid-cell into both cell halves. This is Segregation and condensation protein A from Bacillus anthracis (strain A0248).